An 80-amino-acid polypeptide reads, in one-letter code: RNA-binding protein Hfq (80 aa).

One can recognise a Sm domain in the interval 10-70; that stretch reads DLFLNTVRKQ…ISTIMPGQPM (61 aa).

The protein belongs to the Hfq family. Homohexamer.

Its function is as follows. RNA chaperone that binds small regulatory RNA (sRNAs) and mRNAs to facilitate mRNA translational regulation in response to envelope stress, environmental stress and changes in metabolite concentrations. Also binds with high specificity to tRNAs. In Agrobacterium fabrum (strain C58 / ATCC 33970) (Agrobacterium tumefaciens (strain C58)), this protein is RNA-binding protein Hfq.